Reading from the N-terminus, the 1902-residue chain is PII-type proteinase (1902 aa).

Residues 1 to 33 (MQRKKKGLSILLAGTVALGALAVLPVGEIQAKA) form the signal peptide. The propeptide occupies 34 to 187 (AISQQTKVSS…VTLAKVYYPT (154 aa)). The 507-residue stretch at 191 to 697 (ANSMANVQAV…AGLVDVKAAI (507 aa)) folds into the Peptidase S8 domain. Residues aspartate 217, histidine 281, and serine 620 each act as charge relay system in the active site. Over residues 1793 to 1805 (KTAGKGDDTTGTS) the composition is skewed to low complexity. The interval 1793-1872 (KTAGKGDDTT…GKGALPKTAE (80 aa)) is disordered. Residues 1867 to 1871 (LPKTA) carry the LPXTG sorting signal motif. A Pentaglycyl murein peptidoglycan amidated threonine modification is found at threonine 1870. Residues 1871–1902 (AETTERPAFGFLGVIVVSLMGVLGLKRKQREE) constitute a propeptide, removed by sortase.

It belongs to the peptidase S8 family.

Its subcellular location is the secreted. It is found in the cell wall. The catalysed reaction is Endopeptidase activity with very broad specificity, although some subsite preference have been noted, e.g. large hydrophobic residues in the P1 and P4 positions, and Pro in the P2 position. Best known for its action on caseins, although it has been shown to hydrolyze hemoglobin and oxidized insulin B-chain.. Its function is as follows. Protease which breaks down milk proteins during the growth of the bacteria on milk. This Lacticaseibacillus paracasei (Lactobacillus paracasei) protein is PII-type proteinase (prtP).